The chain runs to 209 residues: rRNA N(6)-adenosine-methyltransferase METTL5 (209 aa).

S-adenosyl-L-methionine-binding positions include Q28, T31, G59, C62, V64, D81, and 108-109 (DV).

The protein belongs to the methyltransferase superfamily. PrmA family. In terms of assembly, heterodimer; heterodimerizes with TRMT112. Ubiquitously expressed in brain.

Its subcellular location is the nucleus. It is found in the presynapse. It localises to the postsynapse. The enzyme catalyses adenosine(1832) in 18S rRNA + S-adenosyl-L-methionine = N(6)-methyladenosine(1832) in 18S rRNA + S-adenosyl-L-homocysteine + H(+). Its activity is regulated as follows. rRNA N6-adenosine-methyltransferase activity is inhibited by zinc. Functionally, catalytic subunit of a heterodimer with TRMT112, which specifically methylates the 6th position of adenine in position 1832 of 18S rRNA. N6-methylation of adenine(1832) in 18S rRNA resides in the decoding center of 18S rRNA and is required for translation and embryonic stem cells (ESCs) pluripotency and differentiation. In Mus musculus (Mouse), this protein is rRNA N(6)-adenosine-methyltransferase METTL5.